Here is a 218-residue protein sequence, read N- to C-terminus: MELTLHEARVIGCLLEKEVTTPEQYPLSLNALTLACNQKTSRDPVLDLSEAQVQDALDSLNKKRLISEQSGFGSRVVKYKHRFCNTEFSELQLSSAAVAIVCLLLLRGPQTPGELRTRSNRLHDFKDVLEVEACIKQLMERDKPVLAQLPREPGKRECRYTELFSQGAEQISAASFTSADAHPLNEQDRQQLEARVTQLEEQVAELKDKLDSLIASLS.

It belongs to the UPF0502 family.

The chain is UPF0502 protein Shewana3_1622 from Shewanella sp. (strain ANA-3).